The primary structure comprises 402 residues: NADH-quinone oxidoreductase subunit D (402 aa).

It belongs to the complex I 49 kDa subunit family. In terms of assembly, NDH-1 is composed of 14 different subunits. Subunits NuoB, C, D, E, F, and G constitute the peripheral sector of the complex.

Its subcellular location is the cell inner membrane. The enzyme catalyses a quinone + NADH + 5 H(+)(in) = a quinol + NAD(+) + 4 H(+)(out). In terms of biological role, NDH-1 shuttles electrons from NADH, via FMN and iron-sulfur (Fe-S) centers, to quinones in the respiratory chain. The immediate electron acceptor for the enzyme in this species is believed to be ubiquinone. Couples the redox reaction to proton translocation (for every two electrons transferred, four hydrogen ions are translocated across the cytoplasmic membrane), and thus conserves the redox energy in a proton gradient. In Cereibacter sphaeroides (strain ATCC 17029 / ATH 2.4.9) (Rhodobacter sphaeroides), this protein is NADH-quinone oxidoreductase subunit D.